A 119-amino-acid chain; its full sequence is Ribonuclease P protein component (119 aa).

It belongs to the RnpA family. As to quaternary structure, consists of a catalytic RNA component (M1 or rnpB) and a protein subunit.

It carries out the reaction Endonucleolytic cleavage of RNA, removing 5'-extranucleotides from tRNA precursor.. RNaseP catalyzes the removal of the 5'-leader sequence from pre-tRNA to produce the mature 5'-terminus. It can also cleave other RNA substrates such as 4.5S RNA. The protein component plays an auxiliary but essential role in vivo by binding to the 5'-leader sequence and broadening the substrate specificity of the ribozyme. The sequence is that of Ribonuclease P protein component from Shewanella woodyi (strain ATCC 51908 / MS32).